A 264-amino-acid polypeptide reads, in one-letter code: Thymidylate synthase (264 aa).

R21 contributes to the dUMP binding site. Residue H51 coordinates (6R)-5,10-methylene-5,6,7,8-tetrahydrofolate. 126–127 (RR) contacts dUMP. C146 serves as the catalytic Nucleophile. DUMP contacts are provided by residues 166–169 (RSCD), N177, and 207–209 (HLY). D169 lines the (6R)-5,10-methylene-5,6,7,8-tetrahydrofolate pocket. Residue A263 participates in (6R)-5,10-methylene-5,6,7,8-tetrahydrofolate binding.

Belongs to the thymidylate synthase family. Bacterial-type ThyA subfamily. As to quaternary structure, homodimer.

It localises to the cytoplasm. The catalysed reaction is dUMP + (6R)-5,10-methylene-5,6,7,8-tetrahydrofolate = 7,8-dihydrofolate + dTMP. It functions in the pathway pyrimidine metabolism; dTTP biosynthesis. In terms of biological role, catalyzes the reductive methylation of 2'-deoxyuridine-5'-monophosphate (dUMP) to 2'-deoxythymidine-5'-monophosphate (dTMP) while utilizing 5,10-methylenetetrahydrofolate (mTHF) as the methyl donor and reductant in the reaction, yielding dihydrofolate (DHF) as a by-product. This enzymatic reaction provides an intracellular de novo source of dTMP, an essential precursor for DNA biosynthesis. This Hamiltonella defensa subsp. Acyrthosiphon pisum (strain 5AT) protein is Thymidylate synthase.